We begin with the raw amino-acid sequence, 798 residues long: Peregrinol diphosphate synthase TPS1, chloroplastic (798 aa).

Residues 1 to 25 (MASLSTPNINNTTFVNSKTQLPAVK) constitute a chloroplast transit peptide. Lys-243 is a binding site for substrate. Positions 377 and 379 each coordinate Mg(2+). Positions 377-380 (DLDD) match the DXDD motif motif. A substrate-binding site is contributed by Lys-463.

The protein belongs to the terpene synthase family. Requires Mg(2+) as cofactor. As to expression, mostly expressed in trichomes of leaves and fruits.

The protein resides in the plastid. Its subcellular location is the chloroplast. It catalyses the reaction peregrinol diphosphate = (2E,6E,10E)-geranylgeranyl diphosphate + H2O. It functions in the pathway secondary metabolite biosynthesis; terpenoid biosynthesis. In terms of biological role, involved in the biosynthesis of labdane-type diterpenoid including cleroda-dienols, and peregrinol lactones and furan derivatives, dopaminergic diterpenoids that can bind to dopamine receptors in the human pituitary gland, have probably ability to lower prolactin levels, and are used to treat menstrual cycle disorders (e.g. premenstrual syndrome and mastodynia). Terpene synthase that produces peregrinol diphosphate from geranylgeranyl diphosphate (GGPP). The chain is Peregrinol diphosphate synthase TPS1, chloroplastic from Vitex agnus-castus (Chaste tree).